Reading from the N-terminus, the 394-residue chain is Aspergillopepsin-1 (394 aa).

The signal sequence occupies residues 1–20; the sequence is MVVFSKTAALVLGLSSAVSA. Positions 21–69 are cleaved as a propeptide — activation peptide; the sequence is APAPTRKGFTINQIARPANKTRTINLPGMYARSLAKFGGTVPQSVKEAA. The 307-residue stretch at 85–391 folds into the Peptidase A1 domain; sequence YLTPVTVGKS…NSEGPKLGFA (307 aa). Catalysis depends on residues aspartate 101 and aspartate 283. Cysteines 319 and 354 form a disulfide.

Belongs to the peptidase A1 family. In terms of assembly, monomer.

The protein resides in the secreted. It catalyses the reaction Hydrolysis of proteins with broad specificity. Generally favors hydrophobic residues in P1 and P1', but also accepts Lys in P1, which leads to activation of trypsinogen. Does not clot milk.. Its function is as follows. Secreted aspartic endopeptidase that allows assimilation of proteinaceous substrates. The scissile peptide bond is attacked by a nucleophilic water molecule activated by two aspartic residues in the active site. Shows a broad primary substrate specificity. Favors hydrophobic residues at the P1 and P1' positions, but also accepts a lysine residue in the P1 position, leading to the activation of trypsinogen and chymotrypsinogen A. The chain is Aspergillopepsin-1 (pepA) from Aspergillus niger (strain ATCC MYA-4892 / CBS 513.88 / FGSC A1513).